We begin with the raw amino-acid sequence, 87 residues long: Small ribosomal subunit protein uS15 (87 aa).

Belongs to the universal ribosomal protein uS15 family. As to quaternary structure, part of the 30S ribosomal subunit. Forms a bridge to the 50S subunit in the 70S ribosome, contacting the 23S rRNA.

One of the primary rRNA binding proteins, it binds directly to 16S rRNA where it helps nucleate assembly of the platform of the 30S subunit by binding and bridging several RNA helices of the 16S rRNA. In terms of biological role, forms an intersubunit bridge (bridge B4) with the 23S rRNA of the 50S subunit in the ribosome. The polypeptide is Small ribosomal subunit protein uS15 (Clostridium beijerinckii (strain ATCC 51743 / NCIMB 8052) (Clostridium acetobutylicum)).